The primary structure comprises 270 residues: MRPIPVKNRIGKNNIDNAKGLKGNKLIRHYHNLLKEKSRLIASSAPIEKIKNVESELENIGIDAYQRASRSGQAEGKGGDSSKILIKWIRTTPCFSYCARLKEPKDLLEIGSVSVDNKCSTCGLFRVSRIDLHSVHPLIKQQDFLERTPEEGLFTGISCSLVLNFAPPELRAKMLLHCTGLLMPPNKEQPPWLFLVLPSPCITNSRYMDEKTLHSIMIQFGFICRQKSISKKIAYYLYSYECFPMKEIDWKKKIVNDGATRNNFFIPCIL.

S-adenosyl-L-methionine contacts are provided by Gly111 and Asp131.

This sequence belongs to the BMT2 family.

Its subcellular location is the nucleus. The protein resides in the nucleolus. Functionally, S-adenosyl-L-methionine-dependent methyltransferase that specifically methylates the N(1) position of an adenine present in helix 65 in 25S rRNA. The chain is 25S rRNA adenine-N(1) methyltransferase from Schizosaccharomyces pombe (strain 972 / ATCC 24843) (Fission yeast).